The chain runs to 409 residues: Phosphatidylserine decarboxylase proenzyme, mitochondrial (409 aa).

Residues 1–52 (MATSVGHRCLGLLHGVAPWRSSLHPCEITALSQSLQPLRKLPFRAFRTDARK) constitute a mitochondrion transit peptide. Residues 36-103 (QPLRKLPFRA…LGLEIPPKLA (68 aa)) are necessary for localization to both lipid droplets and mitochondria. At 53–63 (IHTAPARTMFL) the chain is on the mitochondrial matrix side. Residues 64-82 (LRPLPILLVTGGGYAGYRQ) form a helical membrane-spanning segment. The Mitochondrial intermembrane segment spans residues 83 to 409 (YEKYRERELE…IRFGEALGSL (327 aa)). Residues Asp191, His267, and Ser378 each act as charge relay system; for autoendoproteolytic cleavage activity in the active site. Catalysis depends on Ser378, which acts as the Schiff-base intermediate with substrate; via pyruvic acid; for decarboxylase activity. The residue at position 378 (Ser378) is a Pyruvic acid (Ser); by autocatalysis.

Belongs to the phosphatidylserine decarboxylase family. PSD-B subfamily. Eukaryotic type I sub-subfamily. Heterodimer of a large membrane-associated beta subunit and a small pyruvoyl-containing alpha subunit. It depends on pyruvate as a cofactor. Post-translationally, is synthesized initially as an inactive proenzyme. Formation of the active enzyme involves a self-maturation process in which the active site pyruvoyl group is generated from an internal serine residue via an autocatalytic post-translational modification. Two non-identical subunits are generated from the proenzyme in this reaction, and the pyruvate is formed at the N-terminus of the alpha chain, which is derived from the carboxyl end of the proenzyme. The autoendoproteolytic cleavage occurs by a canonical serine protease mechanism, in which the side chain hydroxyl group of the serine supplies its oxygen atom to form the C-terminus of the beta chain, while the remainder of the serine residue undergoes an oxidative deamination to produce ammonia and the pyruvoyl prosthetic group on the alpha chain. During this reaction, the Ser that is part of the protease active site of the proenzyme becomes the pyruvoyl prosthetic group, which constitutes an essential element of the active site of the mature decarboxylase.

It is found in the mitochondrion inner membrane. It localises to the cytoplasm. The protein resides in the lipid droplet. It catalyses the reaction a 1,2-diacyl-sn-glycero-3-phospho-L-serine + H(+) = a 1,2-diacyl-sn-glycero-3-phosphoethanolamine + CO2. It participates in phospholipid metabolism; phosphatidylethanolamine biosynthesis. In terms of biological role, catalyzes the formation of phosphatidylethanolamine (PtdEtn) from phosphatidylserine (PtdSer). Plays a central role in phospholipid metabolism and in the interorganelle trafficking of phosphatidylserine. May be involved in lipid droplet biogenesis at the endoplasmic reticulum membrane. The protein is Phosphatidylserine decarboxylase proenzyme, mitochondrial of Homo sapiens (Human).